The following is a 295-amino-acid chain: Pyridoxal 5'-phosphate synthase subunit PdxS (295 aa).

Residue Asp-25 coordinates D-ribose 5-phosphate. Catalysis depends on Lys-82, which acts as the Schiff-base intermediate with D-ribose 5-phosphate. D-ribose 5-phosphate is bound at residue Gly-154. Position 166 (Arg-166) interacts with D-glyceraldehyde 3-phosphate. Residues Gly-215 and Gly-236–Ser-237 contribute to the D-ribose 5-phosphate site.

Belongs to the PdxS/SNZ family. In terms of assembly, in the presence of PdxT, forms a dodecamer of heterodimers.

It catalyses the reaction aldehydo-D-ribose 5-phosphate + D-glyceraldehyde 3-phosphate + L-glutamine = pyridoxal 5'-phosphate + L-glutamate + phosphate + 3 H2O + H(+). It functions in the pathway cofactor biosynthesis; pyridoxal 5'-phosphate biosynthesis. Its function is as follows. Catalyzes the formation of pyridoxal 5'-phosphate from ribose 5-phosphate (RBP), glyceraldehyde 3-phosphate (G3P) and ammonia. The ammonia is provided by the PdxT subunit. Can also use ribulose 5-phosphate and dihydroxyacetone phosphate as substrates, resulting from enzyme-catalyzed isomerization of RBP and G3P, respectively. The protein is Pyridoxal 5'-phosphate synthase subunit PdxS of Pasteurella multocida (strain Pm70).